A 318-amino-acid polypeptide reads, in one-letter code: HPr kinase/phosphorylase (318 aa).

Catalysis depends on residues His-143 and Lys-164. Position 158-165 (158-165) interacts with ATP; sequence GKSGVGKS. Ser-165 serves as a coordination point for Mg(2+). The active-site Proton acceptor; for phosphorylation activity. Proton donor; for dephosphorylation activity is the Asp-182. The tract at residues 206 to 215 is important for the catalytic mechanism of both phosphorylation and dephosphorylation; that stretch reads MEIRGLGILN. Glu-207 provides a ligand contact to Mg(2+). Arg-248 is an active-site residue. Positions 269-274 are important for the catalytic mechanism of dephosphorylation; sequence PVKPGR.

The protein belongs to the HPrK/P family. As to quaternary structure, homohexamer. Mg(2+) is required as a cofactor.

The enzyme catalyses [HPr protein]-L-serine + ATP = [HPr protein]-O-phospho-L-serine + ADP + H(+). It carries out the reaction [HPr protein]-O-phospho-L-serine + phosphate + H(+) = [HPr protein]-L-serine + diphosphate. Its function is as follows. Catalyzes the ATP- as well as the pyrophosphate-dependent phosphorylation of a specific serine residue in HPr, a phosphocarrier protein of the phosphoenolpyruvate-dependent sugar phosphotransferase system (PTS). HprK/P also catalyzes the pyrophosphate-producing, inorganic phosphate-dependent dephosphorylation (phosphorolysis) of seryl-phosphorylated HPr (P-Ser-HPr). In Leptospira borgpetersenii serovar Hardjo-bovis (strain L550), this protein is HPr kinase/phosphorylase.